Reading from the N-terminus, the 928-residue chain is Kinesin heavy chain (928 aa).

In terms of domain architecture, Kinesin motor spans S7–I330. Residues G88–S95 and G238–T245 each bind ATP. A coiled-coil region spans residues A343–A866. Residues S395–R409 are compositionally biased toward low complexity. Disordered regions lie at residues S395–K434 and G893–S928. Residues N905–S928 show a composition bias toward polar residues.

Belongs to the TRAFAC class myosin-kinesin ATPase superfamily. Kinesin family. Kinesin subfamily.

The protein resides in the cytoplasm. The protein localises to the cytoskeleton. In terms of biological role, kinesin is a microtubule-associated force-producing protein that may play a role in organelle transport. Its motor activity is directed toward the microtubule's plus end. The polypeptide is Kinesin heavy chain (kin) (Neurospora crassa (strain ATCC 24698 / 74-OR23-1A / CBS 708.71 / DSM 1257 / FGSC 987)).